A 256-amino-acid chain; its full sequence is Short-chain dehydrogenase/reductase cdmF (256 aa).

NADP(+) contacts are provided by V11, D57, and R119. Catalysis depends on S137, which acts as the Proton donor. Y151, K155, G183, and N187 together coordinate NADP(+). The active-site Proton acceptor is Y151. The active-site Lowers pKa of active site Tyr is K155.

This sequence belongs to the short-chain dehydrogenases/reductases (SDR) family.

It carries out the reaction 3-hydroxypentacecilide A + A = chrodrimanin C + AH2. The catalysed reaction is chrodrimanin F + A = chrodrimanin H + AH2. It functions in the pathway secondary metabolite biosynthesis; terpenoid biosynthesis. In terms of biological role, short-chain dehydrogenase/reductase; part of the gene cluster that mediates the biosynthesis of chrodrimanin B, a meroterpenoid that acts as a potent blocker of insect GABA-gated chloride channels. The first step of the pathway is the biosynthesis of 6-hydroxymellein by the polyketide synthase cdmE. The prenyltransferase cdmH acts as a 6-hydroxymellein 5-farnesyltransferase and produces the hydrophobic metabolite verruculide C. The FAD-dependent monooxygenase cdmI further converts verruculide C into verruculide B. The terpene cyclase cdmG then produced the pentacyclic molecule 3-hydroxypentacecilide A, the backbone structure of chrodrimanin B, via folding the farnesyl moiety of the substrate into the chair-boat conformation. The short-chain dehydrogenase/reductase cdmF functions as the 3-OH dehydrogenase that oxidizes the C-3 hydroxyl group of 3-hydroxypentacecilide A and produces chrodrimanin C, the dehydrogenated product of 3-hydroxypentacecilide A. The cytochrome P450 monooxygenase cdmJ then accepts both 3-hydroxypentacecilide A and chrodrimanin C and functions as a C-7-beta-hydroxylase to produce respectively chrodrimanin H and chrodrimanin F. The dioxygenase cdmA accepts chrodrimanin H to afford chrodrimanin E, which is further transformed to chrodrimanin A by the dioxygenase cdmD. CdmA can also accept chrodrimanin C as substrate to convert it into verruculide A, which is further converted into chrodrimanin T by cdmD. The last step of the biosynthesis is proposed to be performed by the acetyltransferase cdmC which acetylates chrodrimanin A to yield chrodrimanin B. The pathway may also lead to the production of additional shunt products, including chrodrimanins T and U. This is Short-chain dehydrogenase/reductase cdmF from Talaromyces verruculosus (Penicillium verruculosum).